A 332-amino-acid polypeptide reads, in one-letter code: Ribonucleoside-diphosphate reductase small chain C (332 aa).

The Fe cation site is built by D76, E107, and H110. Y114 is an active-site residue. Residues E169, E203, and H206 each coordinate Fe cation.

Belongs to the ribonucleoside diphosphate reductase small chain family. Homodimer and heterodimer with RNR2A. Heterotetramer of two R1 and two R2 chains. Interacts with CSN7 (via C-terminal tail). Fe cation is required as a cofactor. Expressed in roots, cauline and rosette leaves, stems and flowers.

It is found in the cytoplasm. The protein localises to the nucleus. It carries out the reaction a 2'-deoxyribonucleoside 5'-diphosphate + [thioredoxin]-disulfide + H2O = a ribonucleoside 5'-diphosphate + [thioredoxin]-dithiol. Its function is as follows. Provides the precursors necessary for DNA synthesis. Catalyzes the biosynthesis of deoxyribonucleotides from the corresponding ribonucleotides. Involved in DNA damage repair and programmed cell death inhibition. This chain is Ribonucleoside-diphosphate reductase small chain C (TSO2), found in Arabidopsis thaliana (Mouse-ear cress).